The following is a 233-amino-acid chain: Probable flavin reductase (233 aa).

Residues 1–133 form the FAD-binding FR-type domain; it reads MLCSIEKIEP…NSLAQGFNQP (133 aa). 111–115 contacts pyridine; it reads GGTGM.

The protein belongs to the Fre/LuxG FAD/NAD(P) flavoprotein oxidoreductase family.

Its function is as follows. Probable flavin reductase in the luminescent systems of different marine bacteria. This is Probable flavin reductase (luxG) from Vibrio harveyi (Beneckea harveyi).